Reading from the N-terminus, the 138-residue chain is Basic phospholipase A2 DAV-N6 (138 aa).

Positions 1–16 are cleaved as a signal peptide; that stretch reads MRTLWIVAVLLVSVEG. 7 disulfides stabilise this stretch: Cys-42–Cys-131, Cys-44–Cys-60, Cys-59–Cys-111, Cys-65–Cys-138, Cys-66–Cys-104, Cys-73–Cys-97, and Cys-91–Cys-102. Ca(2+) contacts are provided by Tyr-43, Gly-45, and Gly-47. The active site involves His-63. Asp-64 serves as a coordination point for Ca(2+). Residue Asp-105 is part of the active site.

Ca(2+) is required as a cofactor. In terms of tissue distribution, expressed by the venom gland.

The protein localises to the secreted. The catalysed reaction is a 1,2-diacyl-sn-glycero-3-phosphocholine + H2O = a 1-acyl-sn-glycero-3-phosphocholine + a fatty acid + H(+). Its function is as follows. Snake venom phospholipase A2 (PLA2) that inhibits neuromuscular transmission by blocking acetylcholine release from the nerve termini. PLA2 catalyzes the calcium-dependent hydrolysis of the 2-acyl groups in 3-sn-phosphoglycerides. This is Basic phospholipase A2 DAV-N6 from Deinagkistrodon acutus (Hundred-pace snake).